We begin with the raw amino-acid sequence, 201 residues long: Small ribosomal subunit protein uS4 (201 aa).

The S4 RNA-binding domain occupies Ala92 to Leu155.

It belongs to the universal ribosomal protein uS4 family. As to quaternary structure, part of the 30S ribosomal subunit. Contacts protein S5. The interaction surface between S4 and S5 is involved in control of translational fidelity.

Functionally, one of the primary rRNA binding proteins, it binds directly to 16S rRNA where it nucleates assembly of the body of the 30S subunit. In terms of biological role, with S5 and S12 plays an important role in translational accuracy. This Phocaeicola vulgatus (strain ATCC 8482 / DSM 1447 / JCM 5826 / CCUG 4940 / NBRC 14291 / NCTC 11154) (Bacteroides vulgatus) protein is Small ribosomal subunit protein uS4.